We begin with the raw amino-acid sequence, 92 residues long: N(2)-fixation sustaining protein CowN (92 aa).

This sequence belongs to the CowN family.

Functionally, is required to sustain N(2)-dependent growth in the presence of low levels of carbon monoxide (CO). Probably acts by protecting the N(2) fixation ability of the nitrogenase complex, which is inactivated in the presence of CO. This chain is N(2)-fixation sustaining protein CowN, found in Rhodobacter capsulatus (strain ATCC BAA-309 / NBRC 16581 / SB1003).